The following is a 389-amino-acid chain: MSGNKSALSVVVAGGGTAGHIEPALAVADAVKAAQPDTRITALGTARGLETTLVPARGYTLELIPPVPLPRKPTMDLVKLPTRILASVRKTREVLDSVDADVIVGFGGYVALPAYLAARGGVLRRRRKIPIVIHEANASAGIANKIGARLATRVLAAVPGSGVKNRGDQDAEIVGIPVRASIANFDRAGLRSQAREYFGLPQDGPVLLVFGGSQGAKSLNDAVSGAAEELAKAGISVLHAHGPKNSLEVTQYSETAPYVAVPYLSRMDLAYAAADATICRSGAMTVAEVSAVGLPAVYVPLPHGNGEQELNAKPVVAAGGAIIVSDNELTPTFVAGTVVPMLSDSARLDKMSSGAANVGHRTAATEIARIVLDIAAKENAVQENARGNR.

UDP-N-acetyl-alpha-D-glucosamine is bound by residues 17-19, Asn-137, Arg-179, Ser-213, and Gln-308; that span reads TAG.

This sequence belongs to the glycosyltransferase 28 family. MurG subfamily.

It is found in the cell membrane. It catalyses the reaction di-trans,octa-cis-undecaprenyl diphospho-N-acetyl-alpha-D-muramoyl-L-alanyl-D-glutamyl-meso-2,6-diaminopimeloyl-D-alanyl-D-alanine + UDP-N-acetyl-alpha-D-glucosamine = di-trans,octa-cis-undecaprenyl diphospho-[N-acetyl-alpha-D-glucosaminyl-(1-&gt;4)]-N-acetyl-alpha-D-muramoyl-L-alanyl-D-glutamyl-meso-2,6-diaminopimeloyl-D-alanyl-D-alanine + UDP + H(+). It functions in the pathway cell wall biogenesis; peptidoglycan biosynthesis. In terms of biological role, cell wall formation. Catalyzes the transfer of a GlcNAc subunit on undecaprenyl-pyrophosphoryl-MurNAc-pentapeptide (lipid intermediate I) to form undecaprenyl-pyrophosphoryl-MurNAc-(pentapeptide)GlcNAc (lipid intermediate II). The protein is UDP-N-acetylglucosamine--N-acetylmuramyl-(pentapeptide) pyrophosphoryl-undecaprenol N-acetylglucosamine transferase of Rhodococcus erythropolis (strain PR4 / NBRC 100887).